The sequence spans 244 residues: Phosphoadenosine 5'-phosphosulfate reductase (244 aa).

Residue Cys-239 is the Nucleophile; cysteine thiosulfonate intermediate of the active site.

The protein belongs to the PAPS reductase family. CysH subfamily.

The protein localises to the cytoplasm. The catalysed reaction is [thioredoxin]-disulfide + sulfite + adenosine 3',5'-bisphosphate + 2 H(+) = [thioredoxin]-dithiol + 3'-phosphoadenylyl sulfate. It functions in the pathway sulfur metabolism; hydrogen sulfide biosynthesis; sulfite from sulfate: step 3/3. Functionally, catalyzes the formation of sulfite from phosphoadenosine 5'-phosphosulfate (PAPS) using thioredoxin as an electron donor. This chain is Phosphoadenosine 5'-phosphosulfate reductase, found in Enterobacter sp. (strain 638).